The following is a 232-amino-acid chain: Succinyl-CoA:3-ketoacid coenzyme A transferase subunit A (232 aa).

24 to 30 (GGFGLCG) provides a ligand contact to CoA.

Belongs to the 3-oxoacid CoA-transferase subunit A family. In terms of assembly, heterodimer of a subunit A and a subunit B.

It carries out the reaction a 3-oxo acid + succinyl-CoA = a 3-oxoacyl-CoA + succinate. The polypeptide is Succinyl-CoA:3-ketoacid coenzyme A transferase subunit A (scoA) (Helicobacter pylori (strain J99 / ATCC 700824) (Campylobacter pylori J99)).